The chain runs to 462 residues: 3-ketoacyl CoA thiolase 1, peroxisomal (462 aa).

The transit peptide at 1-34 directs the protein to the peroxisome; sequence MEKAIQRQRVLLEHLQPIRHHTHDHSSSLTTSIC. Cysteine 138 acts as the Acyl-thioester intermediate in catalysis. Active-site proton acceptor residues include histidine 393 and cysteine 425. Glycine 427 lines the substrate pocket.

It belongs to the thiolase-like superfamily. Thiolase family. In terms of assembly, homodimer.

The protein localises to the peroxisome. It catalyses the reaction an acyl-CoA + acetyl-CoA = a 3-oxoacyl-CoA + CoA. It participates in aromatic compound metabolism. Its pathway is lipid metabolism; fatty acid metabolism. In terms of biological role, component of the floral volatile benzenoid/phenylpropanoid (FVBP) biosynthetic pathway. Thiolase that catalyzes the conversion of 3-oxo-3-phenylpropionyl-CoA (benzoylacetyl-CoA) to benzoyl-CoA. The sequence is that of 3-ketoacyl CoA thiolase 1, peroxisomal from Petunia hybrida (Petunia).